Here is a 212-residue protein sequence, read N- to C-terminus: Peptidyl-prolyl cis-trans isomerase-like 3 (212 aa).

One can recognise a PPIase cyclophilin-type domain in the interval 1–198 (MSVTLHTTHG…EGEEGGYEAI (198 aa)).

The protein belongs to the cyclophilin-type PPIase family. PPIL3 subfamily.

The enzyme catalyses [protein]-peptidylproline (omega=180) = [protein]-peptidylproline (omega=0). Functionally, PPIases accelerate the folding of proteins. It catalyzes the cis-trans isomerization of proline imidic peptide bonds in oligopeptides. The polypeptide is Peptidyl-prolyl cis-trans isomerase-like 3 (cyp10) (Aspergillus fumigatus (strain ATCC MYA-4609 / CBS 101355 / FGSC A1100 / Af293) (Neosartorya fumigata)).